Reading from the N-terminus, the 236-residue chain is Ribosome-inactivating protein saporin-3 (236 aa).

The active site involves glutamate 148.

It belongs to the ribosome-inactivating protein family. Type 1 RIP subfamily.

The catalysed reaction is Endohydrolysis of the N-glycosidic bond at one specific adenosine on the 28S rRNA.. Functionally, ribosome-inactivating protein of type 1, inhibits protein synthesis in animal cells. Useful as immunotoxin for pharmacological applications. The chain is Ribosome-inactivating protein saporin-3 (SAP3) from Saponaria officinalis (Common soapwort).